Consider the following 456-residue polypeptide: Putative F-box/FBD/LRR-repeat protein At1g66300 (456 aa).

The interval Met1–Lys23 is disordered. Positions Val28–Asp74 constitute an F-box domain. LRR repeat units follow at residues His136–Gly163, Val185–Arg210, Pro234–His260, and Phe347–Ser372. The 53-residue stretch at Met377–Leu429 folds into the FBD domain.

The protein is Putative F-box/FBD/LRR-repeat protein At1g66300 of Arabidopsis thaliana (Mouse-ear cress).